The chain runs to 428 residues: Citrate synthase (428 aa).

Residues H265, H306, and D363 contribute to the active site.

It belongs to the citrate synthase family. Homohexamer.

The enzyme catalyses oxaloacetate + acetyl-CoA + H2O = citrate + CoA + H(+). It participates in carbohydrate metabolism; tricarboxylic acid cycle; isocitrate from oxaloacetate: step 1/2. With respect to regulation, allosterically inhibited by NADH. This chain is Citrate synthase (gltA), found in Pseudomonas aeruginosa (strain ATCC 15692 / DSM 22644 / CIP 104116 / JCM 14847 / LMG 12228 / 1C / PRS 101 / PAO1).